The chain runs to 965 residues: Aminopeptidase N (965 aa).

Residues 1–8 lie on the Cytoplasmic side of the membrane; the sequence is MAKGFYIS. Residues 9–32 form a helical; Signal-anchor for type II membrane protein membrane-spanning segment; it reads KALGILAILLGVAAVATIIALSVV. The tract at residues 33–65 is cytosolic Ser/Thr-rich junction; it reads YAQEKNKNAERGTAAPTSPTGPTTTSATTLDQS. Topologically, residues 33–965 are extracellular; that stretch reads YAQEKNKNAE…VVLNWFKDHS (933 aa). A disordered region spans residues 40–65; sequence NAERGTAAPTSPTGPTTTSATTLDQS. Low complexity predominate over residues 44–61; it reads GTAAPTSPTGPTTTSATT. The interval 66 to 965 is metalloprotease; that stretch reads KPWNRYRLPT…VVLNWFKDHS (900 aa). An N-linked (GlcNAc...) asparagine glycan is attached at Asn125. Tyr173 is subject to Sulfotyrosine. N-linked (GlcNAc...) asparagine glycosylation is found at Asn231, Asn260, and Asn316. Residue 349 to 353 coordinates substrate; sequence GAMEN. Residue His385 participates in Zn(2+) binding. Glu386 acts as the Proton acceptor in catalysis. Zn(2+)-binding residues include His389 and Glu408. A Sulfotyrosine modification is found at Tyr416. Asn508, Asn569, Asn624, Asn680, Asn734, and Asn738 each carry an N-linked (GlcNAc...) asparagine glycan. Cystine bridges form between Cys760–Cys767 and Cys797–Cys833.

The protein belongs to the peptidase M1 family. Homodimer. Interacts with SLC6A19. Zn(2+) is required as a cofactor. In terms of processing, sulfated. Post-translationally, N- and O-glycosylated. May undergo proteolysis and give rise to a soluble form.

It is found in the cell membrane. The catalysed reaction is Release of an N-terminal amino acid, Xaa-|-Yaa- from a peptide, amide or arylamide. Xaa is preferably Ala, but may be most amino acids including Pro (slow action). When a terminal hydrophobic residue is followed by a prolyl residue, the two may be released as an intact Xaa-Pro dipeptide.. Its function is as follows. Broad specificity aminopeptidase which plays a role in the final digestion of peptides generated from hydrolysis of proteins by gastric and pancreatic proteases. Also involved in the processing of various peptides including peptide hormones, such as angiotensin III and IV, neuropeptides, and chemokines. May also be involved the cleavage of peptides bound to major histocompatibility complex class II molecules of antigen presenting cells. May have a role in angiogenesis and promote cholesterol crystallization. May have a role in amino acid transport by acting as binding partner of amino acid transporter SLC6A19 and regulating its activity. In Bos taurus (Bovine), this protein is Aminopeptidase N (ANPEP).